We begin with the raw amino-acid sequence, 358 residues long: Peptide chain release factor 1 (358 aa).

Gln233 is modified (N5-methylglutamine).

Belongs to the prokaryotic/mitochondrial release factor family. Post-translationally, methylated by PrmC. Methylation increases the termination efficiency of RF1.

The protein localises to the cytoplasm. In terms of biological role, peptide chain release factor 1 directs the termination of translation in response to the peptide chain termination codons UAG and UAA. The chain is Peptide chain release factor 1 from Staphylococcus saprophyticus subsp. saprophyticus (strain ATCC 15305 / DSM 20229 / NCIMB 8711 / NCTC 7292 / S-41).